The sequence spans 72 residues: Translation initiation factor IF-1 (72 aa).

An S1-like domain is found at 1–72 (MTKEDNIEMQ…TKGRIIFRSR (72 aa)).

It belongs to the IF-1 family. Component of the 30S ribosomal translation pre-initiation complex which assembles on the 30S ribosome in the order IF-2 and IF-3, IF-1 and N-formylmethionyl-tRNA(fMet); mRNA recruitment can occur at any time during PIC assembly.

It localises to the cytoplasm. In terms of biological role, one of the essential components for the initiation of protein synthesis. Stabilizes the binding of IF-2 and IF-3 on the 30S subunit to which N-formylmethionyl-tRNA(fMet) subsequently binds. Helps modulate mRNA selection, yielding the 30S pre-initiation complex (PIC). Upon addition of the 50S ribosomal subunit IF-1, IF-2 and IF-3 are released leaving the mature 70S translation initiation complex. This is Translation initiation factor IF-1 from Buchnera aphidicola subsp. Schizaphis graminum (strain Sg).